A 194-amino-acid polypeptide reads, in one-letter code: HTH-type nicotine-responsive transcriptional repressor HdnoR (194 aa).

Residues 6-66 (VDRRQQLIDA…AAAAELLQQL (61 aa)) form the HTH tetR-type domain. Residues 29 to 48 (SLRTIASEAKASLAAVHVCF) constitute a DNA-binding region (H-T-H motif).

Homodimer.

Its activity is regulated as follows. 6-hydroxy-D-nicotine and 6-hydroxy-L-nicotine prevent HdnoR from binding to the IR1 DNA. Both 6-hydroxy-nicotine enantiomers prevent DNA-protein complex formation at micromolar concentrations, with the D-enantiomer being twice as potent as the L-enantiomer. A thousand-fold higher L-nicotine concentration is required to elicit a similar effect. Functionally, represses expression of the 6-hydroxy-D-nicotine oxidase (6-hdno). Acts by binding to a gene operator site consisting of two inverted repeats, IR1 (covering the 6-hdno promoter region) and IR2 (situated upstream from the 6-hdno promoter). Binding to one site may stimulate binding of the protein to the second site. The chain is HTH-type nicotine-responsive transcriptional repressor HdnoR from Paenarthrobacter nicotinovorans (Arthrobacter nicotinovorans).